We begin with the raw amino-acid sequence, 1367 residues long: MKRIRDDIYATGSQFKRPLGSSRGESYEQSPITGGGSIGEGGINTQKLTTDDALTYLKEVKEMFQDQRDKYDMFLEVMKDFKAQKTDTSGVISRVKELFKGHNNLIFGFNTFLPKGFEITLDDVEAPSKKTVEFEEAISFVNKIKTRFQHNELVYKSFLEILNMYRKDNKDITEVYNEVSTLFEDHSDLLEEFTRFLPDSLAPHTEAQLLRSQAQRYDDRGSGPPLVRRMFMEKDRRRERTVASRGDRDHSVDRSDLNDDKSMVKMHRDQRKRVDKDNRERRSRDLEDGEAEQDNLQHFSEKRKSSRRMEGFEAYSGPASHSEKNNLKSMYNQAFLFCEKVKERLCSQDDYQAFLKCLNMFSNGIIQRKDLQNLVSDVLGKFPDLMDEFNQFFERCESIDGFQHLAGVMSKKSLGSEENLSRSVKGEEKDREHKRDVEAAKEKERSKDKYMGKSIQELDLSDCERCTPSYRLLPPDYPIPSVRHRQKSGAAVLNDHWVSVTSGSEDYSFKHMRRNQYEESLFRCEDDRFELDMLLESVGSAAKSAEELLNIIIDKKISFEGSFRIEDHFTALNLRCIERLYGDHGLDVTDLIRKNPAAALPVILTRLKQKQDEWTKCREGFNVVWADVYAKNHYKSLDHRSFYFKQQDSKNLSAKALVSEVKDLKEKSQKEDDVVLSISAGYRQPIIPHLEYDYLDRAIHEDLFKLVQFSCEEICSTKEQTGKVLKLWANFLELMLDVAPRAKGSDSVEDVVETQHQRAFTSGEANESSDAISLVSRQLKFATNGDVHASSGVSKHGETGLLNRDSSGKENLKDGDLANKDVATCAEKPQKDQEIGNGAAKRSGDVDERVATSSSSFPSGVENNNGKVGSRDSSGSRGILSKPSEAIDKVDSIQHTQGVDIGRIIVLGNGLQSDTSKANSNYDESGGPSKIEKEEGELSPVGDSEDNFVVYEDRELKATAKTEHSVEAEGENDEDADDEDGDDASEAGEDASGTESIGDECSQDDNGVEEEGEHDEIDGKAESEGEAEGMESHLIEDKGLFPSSERVLLSVKPLSKHIAAAALVDEKKKDSRVFYGNDDFYVLFRLHRVSAIDSYDLLSHILYERILSAKTYCSGSEMKLRNTKDTCSPDPYARFMNALFSLLNGSAENSKFEDECRAIIGNQSYVLFTLEKLIYKLVKQLQAVVADDMDNKLLQLYEYENSRRPGRVFDSVYYENARILLHEENIYRLECSSSPSRLSIQLMDNIIEKPDAYAVSMEPTFTSYLQNEFLSNSSGKKELQDIVLQRNMRGYNGLDDLAVACKAMEGVQVINGLECKMSCSSYKISYVLDTEDFFHRKKKQKKSNNLSLAKLSQNRIARFHKFLSASR.

The disordered stretch occupies residues 14 to 44 (QFKRPLGSSRGESYEQSPITGGGSIGEGGIN). Residues 33–42 (TGGGSIGEGG) are compositionally biased toward gly residues. PAH domains follow at residues 46–116 (QKLT…LPKG) and 130–200 (KTVE…LPDS). A disordered region spans residues 212-322 (SQAQRYDDRG…EAYSGPASHS (111 aa)). Basic and acidic residues-rich tracts occupy residues 230–286 (MFME…SRDL) and 299–311 (FSEKRKSSRRMEG). In terms of domain architecture, PAH 3 spans 327–396 (LKSMYNQAFL…DEFNQFFERC (70 aa)). Disordered regions lie at residues 417–446 (EENLSRSVKGEEKDREHKRDVEAAKEKERS), 786–883 (DVHA…LSKP), 912–946 (QSDTSKANSNYDESGGPSKIEKEEGELSPVGDSED), and 958–1031 (ATAK…EGME). Basic and acidic residues-rich tracts occupy residues 424 to 446 (VKGEEKDREHKRDVEAAKEKERS) and 806 to 819 (SSGKENLKDGDLAN). Composition is skewed to polar residues over residues 851 to 876 (ATSSSSFPSGVENNNGKVGSRDSSGS) and 912 to 923 (QSDTSKANSNYD). A compositionally biased stretch (basic and acidic residues) spans 958-967 (ATAKTEHSVE). Composition is skewed to acidic residues over residues 968–989 (AEGENDEDADDEDGDDASEAGE) and 997–1016 (IGDECSQDDNGVEEEGEHDE). S1023 carries the phosphoserine modification.

It is found in the nucleus. Its function is as follows. Acts as a transcriptional repressor. Plays roles in regulating gene expression and genome stability. The protein is Paired amphipathic helix protein Sin3-like 2 (SNL2) of Arabidopsis thaliana (Mouse-ear cress).